The following is a 105-amino-acid chain: Large ribosomal subunit protein uL24 (105 aa).

Residues 75-105 (DSDGNPTRVGYRTDEESGKRVRISRKNGKDI) are disordered. The span at 94 to 105 (RVRISRKNGKDI) shows a compositional bias: basic residues.

Belongs to the universal ribosomal protein uL24 family. In terms of assembly, part of the 50S ribosomal subunit.

Its function is as follows. One of two assembly initiator proteins, it binds directly to the 5'-end of the 23S rRNA, where it nucleates assembly of the 50S subunit. One of the proteins that surrounds the polypeptide exit tunnel on the outside of the subunit. The polypeptide is Large ribosomal subunit protein uL24 (Rhodococcus jostii (strain RHA1)).